The primary structure comprises 141 residues: MSNITIYHNPTCGTSRNTLEMIRNSGNEPTVIYYLETPPTHDELVKLIADMGITVRALLRKNVEPYEELGLAEGTFSDEQLIGFMLEHPILINRPIVVTPLGTRLCRPSEVVLDILPEPQQGAFTKEDGEKITDESGKRLK.

The active-site Nucleophile; cysteine thioarsenate intermediate is the C12. The disordered stretch occupies residues 122 to 141 (GAFTKEDGEKITDESGKRLK). Basic and acidic residues predominate over residues 125–141 (TKEDGEKITDESGKRLK).

This sequence belongs to the ArsC family.

It catalyses the reaction [glutaredoxin]-dithiol + arsenate + glutathione + H(+) = glutathionyl-S-S-[glutaredoxin] + arsenite + H2O. Involved in resistance to arsenate. Catalyzes the reduction of arsenate [As(V)] to arsenite [As(III)]. The chain is Arsenate reductase (arsC) from Yersinia enterocolitica.